A 962-amino-acid polypeptide reads, in one-letter code: Exportin-T (962 aa).

The residue at position 1 (Met-1) is an N-acetylmethionine. The tract at residues Met-1–Tyr-385 is necessary for interaction with Ran, nuclear localization and nuclear import. The interval Phe-443 to Pro-962 is necessary for tRNA-binding, cytoplasmic localization and nuclear export. Lys-634 is subject to N6-acetyllysine.

The protein belongs to the exportin family. As to quaternary structure, found in a complex with XPOT, Ran and tRNA. Probably found in a complex with nucleoporins. Interacts with Ran and tRNA in a GTP-dependent manner.

It is found in the nucleus. The protein resides in the cytoplasm. Functionally, mediates the nuclear export of aminoacylated tRNAs. In the nucleus binds to tRNA and to the GTPase Ran in its active GTP-bound form. Docking of this trimeric complex to the nuclear pore complex (NPC) is mediated through binding to nucleoporins. Upon transit of a nuclear export complex into the cytoplasm, disassembling of the complex and hydrolysis of Ran-GTP to Ran-GDP (induced by RANBP1 and RANGAP1, respectively) cause release of the tRNA from the export receptor. XPOT then return to the nuclear compartment and mediate another round of transport. The directionality of nuclear export is thought to be conferred by an asymmetric distribution of the GTP- and GDP-bound forms of Ran between the cytoplasm and nucleus. In Homo sapiens (Human), this protein is Exportin-T (XPOT).